A 37-amino-acid chain; its full sequence is Large ribosomal subunit protein bL36 (37 aa).

It belongs to the bacterial ribosomal protein bL36 family.

The polypeptide is Large ribosomal subunit protein bL36 (Rippkaea orientalis (strain PCC 8801 / RF-1) (Cyanothece sp. (strain PCC 8801))).